The following is a 209-amino-acid chain: Kynurenine formamidase (209 aa).

Substrate is bound at residue Trp-20. His-50, His-54, and Asp-56 together coordinate Zn(2+). His-60 functions as the Proton donor/acceptor in the catalytic mechanism. His-161 and Glu-173 together coordinate Zn(2+).

Belongs to the Cyclase 1 superfamily. KynB family. As to quaternary structure, homodimer. The cofactor is Zn(2+).

It carries out the reaction N-formyl-L-kynurenine + H2O = L-kynurenine + formate + H(+). It functions in the pathway amino-acid degradation; L-tryptophan degradation via kynurenine pathway; L-kynurenine from L-tryptophan: step 2/2. In terms of biological role, catalyzes the hydrolysis of N-formyl-L-kynurenine to L-kynurenine, the second step in the kynurenine pathway of tryptophan degradation. The protein is Kynurenine formamidase of Bacillus cereus (strain ATCC 10987 / NRS 248).